A 317-amino-acid chain; its full sequence is (2S)-3-sulfopropanediol dehydratase activating enzyme (317 aa).

Positions 18 to 306 (HDGPGLRTEL…QMLAEYFNQR (289 aa)) constitute a Radical SAM core domain. Residues C32, C36, C39, C58, C64, C67, C71, C92, C95, C98, and C102 each contribute to the [4Fe-4S] cluster site. 38–40 (WCS) contacts S-adenosyl-L-methionine. 4Fe-4S ferredoxin-type domains follow at residues 49–82 (AQVG…FTRG) and 83–112 (KLTS…LWGK). S-adenosyl-L-methionine is bound by residues G142 and 191–193 (DIK).

This sequence belongs to the organic radical-activating enzymes family. It depends on [4Fe-4S] cluster as a cofactor.

It catalyses the reaction glycyl-[protein] + reduced [flavodoxin] + S-adenosyl-L-methionine = glycin-2-yl radical-[protein] + semiquinone [flavodoxin] + 5'-deoxyadenosine + L-methionine + H(+). Its pathway is organosulfur degradation; alkanesulfonate degradation. In terms of biological role, involved in the degradation of the organosulfur compound 2(S)-dihydroxypropanesulfonate (DHPS). Catalyzes activation of the (2S)-3-sulfopropanediol dehydratase HpfG under anaerobic conditions by generation of an organic free radical on a glycine residue. This Klebsiella oxytoca protein is (2S)-3-sulfopropanediol dehydratase activating enzyme.